Consider the following 675-residue polypeptide: MFLKLLTIFFFFFFNLIFQSSSQSLNFAYNNGFNPPTDLSIQGITTVTPNGLLKLTNTTVQKTGHAFYTKPIRFKDSPNGTVSSFSTSFVFAIHSQIAILSGHGIAFVVAPNASLPYGNPSQYIGLFNLANNGNETNHVFAVELDTILSTEFNDTNDNHVGIDINSLKSVQSSPAGYWDEKGQFKNLTLISRKPMQVWVDYDGRTNKIDVTMAPFNEDKPTRPLVTAVRDLSSVLLQDMYVGFSSATGSVLSEHYILGWSFGLNEKAPPLALSRLPKLPRFEPKRISEFYKIGMPLISLFLIFSFIFLVCYIVRRRRKFAEELEEWEKEFGKNRFRFKDLYYATKGFKEKGLLGTGGFGSVYKGVMPGTKLEIAVKRVSHESRQGMKEFVAEIVSIGRMSHRNLVPLLGYCRRRGELLLVYDYMPNGSLDKYLYNTPEVTLNWKQRIKVILGVASGLFYLHEEWEQVVIHRDVKASNVLLDGELNGRLGDFGLARLYDHGSDPQTTHVVGTLGYLAPEHTRTGRATMATDVFAFGAFLLEVACGRRPIEFQQETDETFLLVDWVFGLWNKGDILAAKDPNMGSECDEKEVEMVLKLGLLCSHSDPRARPSMRQVLHYLRGDAKLPELSPLDLSGSGMMFGVHDGFSELGMSYSSSVFKGFTGGSSIADSQLSGGR.

Residues 1–22 form the signal peptide; it reads MFLKLLTIFFFFFFNLIFQSSS. The Extracellular segment spans residues 23–291; that stretch reads QSLNFAYNNG…EPKRISEFYK (269 aa). A legume-lectin like region spans residues 25–261; that stretch reads LNFAYNNGFN…SEHYILGWSF (237 aa). Residues Asn-57, Asn-79, Asn-112, Asn-134, Asn-153, and Asn-186 are each glycosylated (N-linked (GlcNAc...) asparagine). A helical transmembrane segment spans residues 292–312; it reads IGMPLISLFLIFSFIFLVCYI. The Cytoplasmic portion of the chain corresponds to 313-675; that stretch reads VRRRRKFAEE…IADSQLSGGR (363 aa). The 278-residue stretch at 347–624 folds into the Protein kinase domain; the sequence is FKEKGLLGTG…LHYLRGDAKL (278 aa). ATP-binding positions include 353-361 and Lys-376; that span reads LGTGGFGSV. The active-site Proton acceptor is Asp-472.

The protein in the C-terminal section; belongs to the protein kinase superfamily. Ser/Thr protein kinase family. In the N-terminal section; belongs to the leguminous lectin family.

The protein localises to the membrane. The enzyme catalyses L-seryl-[protein] + ATP = O-phospho-L-seryl-[protein] + ADP + H(+). It carries out the reaction L-threonyl-[protein] + ATP = O-phospho-L-threonyl-[protein] + ADP + H(+). The chain is L-type lectin-domain containing receptor kinase IV.1 (LECRK41) from Arabidopsis thaliana (Mouse-ear cress).